The sequence spans 787 residues: MAVWIQAQQLQGDALHQMQALYGQHFPIEVRHYLSQWIESQAWDSIDLDNPQENIKATQLLEGLVQELQKKAEHQVGEDGFLLKIKLGHYATQLQNTYDRCPMELVRCIRHILYNEQRLVREANNGTSPAGSLADAMSQKHLQINQTFEELRPVTQDTENELKKLQQTQEYFIIQYQESLRIQAQFAQLAQLNPQERLSRETALQQKQVTLEAWLQREAQTLQQYRVELAEKHQKTLQLLRKQQTIILDDELIQWKRRQQLAGNGGPPEGSLDVLQSWCEKLAEIIWQNRQQIRRAEHLCQQLPIPGPVEEMLAEVNATITDIISALVTSTFIIEKQPPQVLKTQTKFAATVRLLVGGKLNVHMNPPQVKATIISEQRAKSLLKNESTRNDCSGEILNNCCVMEYHQATGTLSAHFRNMSLKRIKRSDRRGAESVTEEKFTILFESQFSVGGNELVFQVKTLSLPVVVIVHGSQDNNATATVLWDNAFAEPGRVPFAVPDKVLWPQLCEALNMKFKAEVQSNRGLTKENLVFLAQKLFNSSSSHLEDYSGMSVSWSQFNRENLPGRNYTFWQWFDGVMEVLKKHLKPHWNDGAILGFVNKQQAHDLLINKPDGTFLLRFSDSEIGGITIAWKFDSQERMFWNLMPFTTRDFSIRSLADRLGDLNYLIYVFPDRPKDEVYSKYYTPVPCEPATAKAVDGYVKPQIKQVVPEFVSASSDSAGGNATYMDQAPSPAVCPQAHYSIYPQNPDPVLDNDGDFDLDDTMDVARRVEELLGRPMDSQWIPHAQS.

Tyr90 carries the post-translational modification Phosphotyrosine. Position 128 is a phosphoserine (Ser128). The SH2 domain maps to Trp589 to Val686. At Tyr682 the chain carries Phosphotyrosine. Residue Tyr699 is modified to Phosphotyrosine; by HCK, JAK and PTK6.

This sequence belongs to the transcription factor STAT family. In terms of assembly, upon activation, forms a homodimer or a heterodimer with a related family member. Binds NR3C1. Interacts with NCOA1. Interacts with NMI. Interacts with SOCS7. Interacts (via SH2 domain) with INSR. Interacts with CPEB3; this inhibits STAT5B-mediated transcriptional activation. In terms of processing, tyrosine phosphorylated in response to signaling via activated KIT, resulting in translocation to the nucleus. Tyrosine phosphorylated in response to signaling via activated FLT3; wild-type FLT3 results in much weaker phosphorylation than constitutively activated mutant FLT3. Alternatively, can be phosphorylated by JAK2. Phosphorylation at Tyr-699 by PTK6 or HCK leads to an increase of its transcriptional activity.

It is found in the cytoplasm. The protein resides in the nucleus. Carries out a dual function: signal transduction and activation of transcription. Mediates cellular responses to the cytokine KITLG/SCF and other growth factors. Binds to the GAS element and activates PRL-induced transcription. Positively regulates hematopoietic/erythroid differentiation. The chain is Signal transducer and activator of transcription 5B (STAT5B) from Sus scrofa (Pig).